A 274-amino-acid chain; its full sequence is Rhamnulose-1-phosphate aldolase (274 aa).

Glutamate 117 is an active-site residue. Zn(2+) is bound by residues histidine 141, histidine 143, and histidine 212.

The protein belongs to the aldolase class II family. RhaD subfamily. In terms of assembly, homotetramer. Zn(2+) serves as cofactor.

The protein localises to the cytoplasm. The enzyme catalyses L-rhamnulose 1-phosphate = (S)-lactaldehyde + dihydroxyacetone phosphate. The protein operates within carbohydrate degradation; L-rhamnose degradation; glycerone phosphate from L-rhamnose: step 3/3. Functionally, catalyzes the reversible cleavage of L-rhamnulose-1-phosphate to dihydroxyacetone phosphate (DHAP) and L-lactaldehyde. The polypeptide is Rhamnulose-1-phosphate aldolase (Escherichia coli O81 (strain ED1a)).